Here is a 431-residue protein sequence, read N- to C-terminus: Protein CLT2, chloroplastic (431 aa).

The transit peptide at 1-79 (MDTVLMATTP…PMRRPRFSVG (79 aa)) directs the protein to the chloroplast. A run of 10 helical transmembrane segments spans residues 99–119 (VVIV…LVPM), 122–142 (YPFF…FTIL), 163–183 (FAII…AAAM), 188–208 (VIPI…LLIL), 212–232 (FLLN…VAVS), 244–264 (IGFL…GASI), 284–304 (IFVV…LLLP), 343–363 (ILPL…LHLV), 365–385 (ISSA…AVYI), and 403–423 (FTMG…PTTP).

The protein belongs to the CRT-like transporter family.

The protein resides in the plastid. It is found in the chloroplast membrane. Functionally, involved in thiol transport from the plastid to the cytosol. Transports probably both glutathione (GSH) and its precursor, gamma-glutamylcysteine (gamma-EC). The protein is Protein CLT2, chloroplastic of Arabidopsis thaliana (Mouse-ear cress).